Reading from the N-terminus, the 239-residue chain is Large ribosomal subunit protein uL1 (239 aa).

Belongs to the universal ribosomal protein uL1 family. Part of the 50S ribosomal subunit.

In terms of biological role, binds directly to 23S rRNA. The L1 stalk is quite mobile in the ribosome, and is involved in E site tRNA release. Its function is as follows. Protein L1 is also a translational repressor protein, it controls the translation of the L11 operon by binding to its mRNA. The sequence is that of Large ribosomal subunit protein uL1 from Rickettsia africae (strain ESF-5).